The primary structure comprises 207 residues: FMN-dependent NADH:quinone oxidoreductase (207 aa).

Residues Ser10, 16–18 (SIS), 96–99 (MYNL), and 141–144 (SRGG) contribute to the FMN site.

The protein belongs to the azoreductase type 1 family. As to quaternary structure, homodimer. FMN serves as cofactor.

The catalysed reaction is 2 a quinone + NADH + H(+) = 2 a 1,4-benzosemiquinone + NAD(+). The enzyme catalyses N,N-dimethyl-1,4-phenylenediamine + anthranilate + 2 NAD(+) = 2-(4-dimethylaminophenyl)diazenylbenzoate + 2 NADH + 2 H(+). In terms of biological role, quinone reductase that provides resistance to thiol-specific stress caused by electrophilic quinones. Its function is as follows. Also exhibits azoreductase activity. Catalyzes the reductive cleavage of the azo bond in aromatic azo compounds to the corresponding amines. This chain is FMN-dependent NADH:quinone oxidoreductase, found in Nostoc sp. (strain PCC 7120 / SAG 25.82 / UTEX 2576).